The primary structure comprises 93 residues: Pancreatic polypeptide prohormone (93 aa).

The signal sequence occupies residues 1-29 (MPAACRCLFLLLLSACVALLLQPPLGTRG). Tyr-65 bears the Tyrosine amide mark. The propeptide occupies 89-93 (ELMDE).

Belongs to the NPY family.

It is found in the secreted. In terms of biological role, hormone secreted by pancreatic cells that acts as a regulator of pancreatic and gastrointestinal functions probably by signaling through the G protein-coupled receptor NPY4R2. The protein is Pancreatic polypeptide prohormone (PPY) of Canis lupus familiaris (Dog).